Here is a 389-residue protein sequence, read N- to C-terminus: Chorismate synthase (389 aa).

NADP(+) is bound by residues arginine 41 and arginine 47. FMN is bound by residues 129 to 131 (RSS), 247 to 248 (NA), glycine 291, 306 to 310 (KPIST), and arginine 332.

This sequence belongs to the chorismate synthase family. As to quaternary structure, homotetramer. FMNH2 serves as cofactor.

It carries out the reaction 5-O-(1-carboxyvinyl)-3-phosphoshikimate = chorismate + phosphate. The protein operates within metabolic intermediate biosynthesis; chorismate biosynthesis; chorismate from D-erythrose 4-phosphate and phosphoenolpyruvate: step 7/7. In terms of biological role, catalyzes the anti-1,4-elimination of the C-3 phosphate and the C-6 proR hydrogen from 5-enolpyruvylshikimate-3-phosphate (EPSP) to yield chorismate, which is the branch point compound that serves as the starting substrate for the three terminal pathways of aromatic amino acid biosynthesis. This reaction introduces a second double bond into the aromatic ring system. In Rubrobacter xylanophilus (strain DSM 9941 / JCM 11954 / NBRC 16129 / PRD-1), this protein is Chorismate synthase.